Consider the following 295-residue polypeptide: Bifunctional protein FolD (295 aa).

NADP(+) is bound by residues 177-179 (GRS) and Ser-202.

This sequence belongs to the tetrahydrofolate dehydrogenase/cyclohydrolase family. Homodimer.

The enzyme catalyses (6R)-5,10-methylene-5,6,7,8-tetrahydrofolate + NADP(+) = (6R)-5,10-methenyltetrahydrofolate + NADPH. The catalysed reaction is (6R)-5,10-methenyltetrahydrofolate + H2O = (6R)-10-formyltetrahydrofolate + H(+). The protein operates within one-carbon metabolism; tetrahydrofolate interconversion. Catalyzes the oxidation of 5,10-methylenetetrahydrofolate to 5,10-methenyltetrahydrofolate and then the hydrolysis of 5,10-methenyltetrahydrofolate to 10-formyltetrahydrofolate. In Psychrobacter arcticus (strain DSM 17307 / VKM B-2377 / 273-4), this protein is Bifunctional protein FolD.